We begin with the raw amino-acid sequence, 59 residues long: Flagellar basal-body rod protein FlgC (59 aa).

Belongs to the flagella basal body rod proteins family. The basal body constitutes a major portion of the flagellar organelle and consists of four rings (L,P,S, and M) mounted on a central rod. The rod consists of about 26 subunits of FlgG in the distal portion, and FlgB, FlgC and FlgF are thought to build up the proximal portion of the rod with about 6 subunits each.

Its subcellular location is the bacterial flagellum basal body. This chain is Flagellar basal-body rod protein FlgC (flgC), found in Borrelia hermsii.